We begin with the raw amino-acid sequence, 1374 residues long: MFMSVVNFCGQLSNTQQFDQIRINIASPDQVRSWSFGEVTKPETINYRTFKPEKDGLFCARIFGPVKDYECLCGKYKRMKNRGITCEKCGVEVTVSRVRRERMGHIELAAPVAHIWFLKSLPSRISTLLDMTMRDIEKILYFENYVVVDPGLSILQKGELLTEEELQKAKDKYGEDAFTASIGAEVIQQMLKELDFSKLKQELYEELQTTSSEVKKKKLVKRLKLVEDFLESENKPEWMIMDVLPVIPPEIRPLVMLDGGRFATSDLNELYRRVINRNNRLKKLIESKAPDIIVRNEKRMLQEAVDALFDNGRRGRAAKNANKRPFKSLSDMLKGKQGRFRQNLLGKRVDYSGRSVIVVGPELKLHQCGLPKKMALELFKPFIYSKLELYGIATTIKAAKKMVEAEKSEVWDVLEEVIREHPVLLNRAPTLHRLGIQAFEPLLIEGKAIQLHPLVCTAFNADFDGDQMAVHIPLSIEAQLEARVFMMSTNNILSPANGRPIIVPDKDIVLGLYYLTLAFDNEVGAGMMFSDLAEMEHALYNKFITIHTKIKYRRNQLNAEGKMVPVIIDTTYGRLMVGELLPSNPNIEFKFINKQLTKKDISLVIDLVYRHCGQKATVIFADQLMKLGFKYACSSGISFGMDDMVVPESKSTHINETQLEIQEFEQQYSNGLITYGEKYNKVVDAWSRCTDRVANDMMKEIATPPVNDDPNHQRINAIYMMAISGARGSFQQIKQLGGMRGLMTKSNGQIIQTPIISNFKEGLTEFECFNSANGMRKGQIDTALKTASSGYLTRKLVDVAQDCIITEKDCGTDKGIEVKSVIEGGEVIVPLAEKILGRTAAIDIFHPVTNDLILNKGELISEAKLEQIESAGLDRIMIKSVLTCESTTGICSICYGRDLATGTLVSEGEAIGVIAAQSIGEPGTQLTMRTFHIGGAATKGAEVSSVDASYDAKVKIISRNVVINSEERKIVMSRNCELLLLDNNGNEKARHKIPYGARLLVDDGDMVIKTQKLAEWDPYTIPIITEKSGKVLFKDMVEGITIRDVTDEATGIPSKVIIESKQYSRGAELRPRIQLLGAKGEVITLSNGLEARYYLPVGAVLSVEDGVQISVGDIIARIPKESTTTKDITGGLPRVAELVEARRPKDHAVIAEIDGRVEFGKDYKSKRRIIIHPIDETMSIEYMVPKGKHVVVNEGDFVKKGDLLIDGNPVLQDILKVMGVEVLANYIVKEVQAVYRLQGVKIDDKHIEVIIRQMLQKVEVTDSGGTTLLAGEKIDRHEFDEINAKAMKNGLKPAEAQLILQGITKASLQTRSFISAASFQETTRVLTEAAIAGKVDKLRGLKENVIVGRLVPAGTGYFMDKMRKAAIKLDEENV.

Positions 71, 73, 86, and 89 each coordinate Zn(2+). Mg(2+) contacts are provided by Asp-462, Asp-464, and Asp-466. Zn(2+) is bound by residues Cys-810, Cys-884, Cys-891, and Cys-894.

Belongs to the RNA polymerase beta' chain family. In terms of assembly, the RNAP catalytic core consists of 2 alpha, 1 beta, 1 beta' and 1 omega subunit. When a sigma factor is associated with the core the holoenzyme is formed, which can initiate transcription. Mg(2+) serves as cofactor. The cofactor is Zn(2+).

The enzyme catalyses RNA(n) + a ribonucleoside 5'-triphosphate = RNA(n+1) + diphosphate. Its function is as follows. DNA-dependent RNA polymerase catalyzes the transcription of DNA into RNA using the four ribonucleoside triphosphates as substrates. The polypeptide is DNA-directed RNA polymerase subunit beta' (Rickettsia massiliae (strain Mtu5)).